We begin with the raw amino-acid sequence, 441 residues long: ATP-dependent protease ATPase subunit HslU (441 aa).

ATP is bound by residues I18, 60–65 (GVGKTE), D254, E319, and R391.

The protein belongs to the ClpX chaperone family. HslU subfamily. As to quaternary structure, a double ring-shaped homohexamer of HslV is capped on each side by a ring-shaped HslU homohexamer. The assembly of the HslU/HslV complex is dependent on binding of ATP.

Its subcellular location is the cytoplasm. ATPase subunit of a proteasome-like degradation complex; this subunit has chaperone activity. The binding of ATP and its subsequent hydrolysis by HslU are essential for unfolding of protein substrates subsequently hydrolyzed by HslV. HslU recognizes the N-terminal part of its protein substrates and unfolds these before they are guided to HslV for hydrolysis. The sequence is that of ATP-dependent protease ATPase subunit HslU from Shewanella sediminis (strain HAW-EB3).